The primary structure comprises 361 residues: Putative F-box protein At1g33010 (361 aa).

The region spanning 4-50 is the F-box domain; the sequence is GNTLDSIPTDLILEIFSRLSAKSVGRLRCLSKLWRKGEWFFFSSLQP. The interval 308-339 is disordered; sequence SIRPTEQKHKPTSTETSMSRKDHQVRTIDQPQ.

In Arabidopsis thaliana (Mouse-ear cress), this protein is Putative F-box protein At1g33010.